Consider the following 150-residue polypeptide: 3-hydroxyacyl-[acyl-carrier-protein] dehydratase FabZ (150 aa).

The active site involves histidine 54.

The protein belongs to the thioester dehydratase family. FabZ subfamily.

The protein resides in the cytoplasm. The enzyme catalyses a (3R)-hydroxyacyl-[ACP] = a (2E)-enoyl-[ACP] + H2O. Involved in unsaturated fatty acids biosynthesis. Catalyzes the dehydration of short chain beta-hydroxyacyl-ACPs and long chain saturated and unsaturated beta-hydroxyacyl-ACPs. In Vibrio campbellii (strain ATCC BAA-1116), this protein is 3-hydroxyacyl-[acyl-carrier-protein] dehydratase FabZ.